Consider the following 264-residue polypeptide: Heavy metal-associated isoprenylated plant protein 17 (264 aa).

HMA domains are found at residues 32–95 (VTDA…KKIE) and 133–204 (IMEV…KERQ). The stretch at 185 to 218 (SRKLNKKMHQKIKKAEKERQEWESEMMLREAEEE) forms a coiled coil. A Cysteine methyl ester modification is found at Cys261. Residue Cys261 is the site of S-farnesyl cysteine attachment. Residues 262 to 264 (SIS) constitute a propeptide, removed in mature form.

Belongs to the HIPP family.

In terms of biological role, probable heavy-metal-binding protein. This chain is Heavy metal-associated isoprenylated plant protein 17, found in Arabidopsis thaliana (Mouse-ear cress).